Consider the following 152-residue polypeptide: Small ribosomal subunit protein uS15 (152 aa).

A compositionally biased stretch (basic residues) spans 1–11 (MAKMHTKRKGK). The segment at 1–22 (MAKMHTKRKGKSSSTRPIRTEP) is disordered.

It belongs to the universal ribosomal protein uS15 family. Part of the 30S ribosomal subunit.

This Methanosarcina barkeri (strain Fusaro / DSM 804) protein is Small ribosomal subunit protein uS15.